The following is a 389-amino-acid chain: Flavin-dependent monooxygenase (389 aa).

FAD is bound by residues 12-15 (AGVA), 34-35 (EK), Q44, R105, Y267, and D289.

The protein belongs to the aromatic-ring hydroxylase family. The cofactor is FAD.

The catalysed reaction is a tetracycline + NADPH + O2 + H(+) = a (1S,10aS)-3-(CONH2)-1-(Me2N)-3,3a,4,6-(HO)4-2,5-dioxo-1H,10aH,11H,11aH-cyclopenta[b]anthracene + CO + NADP(+) + H2O. It carries out the reaction 7-chlorotetracycline + NADPH + O2 + H(+) = (1S,10S,10aS)-3-(CONH2)-9-Cl-1-(Me2N)-3,3a,4,10-(HO)4-10-Me-2,5-dioxo-1H,10aH,11H,11aH-cyclopenta[b]anthracen-6-olate + CO + NADP(+) + H2O. Its activity is regulated as follows. Inhibited by anhydrotetracycline. In terms of biological role, an FAD-requiring monooxygenase active on tetracycline antibiotic and some of its derivatives, which leads to their inactivation. Expression in E.coli confers high resistance to tetracycline and oxytetracycline, does not confer resistance to minocycline or tigecycline. The reaction requires NADPH. Expression in L.pneumophila confers resistance to tetracycline. Degrades and confers resistance to tetracycline and chlortetracycline. This chain is Flavin-dependent monooxygenase (tet(56)), found in Legionella longbeachae serogroup 1 (strain NSW150).